Here is a 501-residue protein sequence, read N- to C-terminus: ATP synthase subunit alpha (501 aa).

169–176 is a binding site for ATP; it reads GDRQTGKT.

Belongs to the ATPase alpha/beta chains family. As to quaternary structure, F-type ATPases have 2 components, CF(1) - the catalytic core - and CF(0) - the membrane proton channel. CF(1) has five subunits: alpha(3), beta(3), gamma(1), delta(1), epsilon(1). CF(0) has three main subunits: a(1), b(2) and c(9-12). The alpha and beta chains form an alternating ring which encloses part of the gamma chain. CF(1) is attached to CF(0) by a central stalk formed by the gamma and epsilon chains, while a peripheral stalk is formed by the delta and b chains.

Its subcellular location is the cell membrane. The enzyme catalyses ATP + H2O + 4 H(+)(in) = ADP + phosphate + 5 H(+)(out). Produces ATP from ADP in the presence of a proton gradient across the membrane. The alpha chain is a regulatory subunit. The protein is ATP synthase subunit alpha of Streptococcus gordonii (strain Challis / ATCC 35105 / BCRC 15272 / CH1 / DL1 / V288).